A 215-amino-acid polypeptide reads, in one-letter code: MPFHPVTAALMYRGIYTVPNLLSEQRPVDIPEDELEEIREAFKVFDRDGNGFISKQELGTAMRSLGYMPNEVELEVIIQRLDMDGDGQVDFEEFVTLLGPKLSTSGIPEKFHGTDFDTVFWKCDMQKLTVDELKRLLYDTFCEHLSMKDIENIIMTEEESHLGTAEECPVDVETCSNQQIRQTCVRKSLICAFAIAFIISVMLIAANQVLRSGMK.

The Cytoplasmic segment spans residues 1–188 (MPFHPVTAAL…QIRQTCVRKS (188 aa)). EF-hand domains follow at residues 33-68 (DELE…LGYM) and 69-104 (PNEV…KLST). 9 residues coordinate Ca(2+): D46, D48, N50, E57, D82, D84, D86, Q88, and E93. Residues 189–209 (LICAFAIAFIISVMLIAANQV) form a helical; Anchor for type IV membrane protein membrane-spanning segment. At 210–215 (LRSGMK) the chain is on the extracellular side.

In terms of assembly, interacts with PI4KB. This binding competes with FREQ/NCS1 binding in a calcium-dependent manner.

The protein resides in the golgi apparatus. It localises to the trans-Golgi network membrane. It is found in the cytoplasm. The protein localises to the perinuclear region. Its subcellular location is the cell membrane. Its function is as follows. Negatively regulates Golgi-to-plasma membrane trafficking by interacting with PI4KB and inhibiting its activity. The chain is Calcium-binding protein 7 (CABP7) from Homo sapiens (Human).